The following is a 450-amino-acid chain: uncharacterized protein (450 aa).

Residues 1 to 58 (MQKNQIVDLEITDLSYEAMGVAHLDGMTVFVNNALPGEIVSAKLLKVKKNFAFAKIEK) enclose the TRAM domain. S-adenosyl-L-methionine is bound by residues Gln-280, Tyr-309, Glu-330, and Asp-378. Cys-405 (nucleophile) is an active-site residue.

This sequence belongs to the class I-like SAM-binding methyltransferase superfamily. RNA M5U methyltransferase family.

This is an uncharacterized protein from Lactobacillus johnsonii (strain CNCM I-12250 / La1 / NCC 533).